A 348-amino-acid chain; its full sequence is uncharacterized protein (348 aa).

A compositionally biased stretch (pro residues) spans 1-11 (MTNPQGPPNDP). Residues 1 to 83 (MTNPQGPPND…RSGRQAAHQA (83 aa)) are disordered. Helical transmembrane passes span 111–131 (LTVFLVLIIVFSLVLAGLIGG) and 235–255 (IPILGAFVTSSVVTHPADGTV).

The protein resides in the cell membrane. This is an uncharacterized protein from Mycobacterium tuberculosis (strain CDC 1551 / Oshkosh).